A 198-amino-acid polypeptide reads, in one-letter code: Holliday junction branch migration complex subunit RuvA (198 aa).

The interval 1-64 (MYEYIKGKYI…EDFIGLYGFD (64 aa)) is domain I. The tract at residues 65 to 143 (SKEELEMFKL…PDELVDSSLE (79 aa)) is domain II. Residues 144 to 149 (IDTKDN) are flexible linker. Positions 150–198 (ENVMALSEALSALIALGYSEKEAESVLKKIDKNDSVENIIKNALKALMG) are domain III.

Belongs to the RuvA family. In terms of assembly, homotetramer. Forms an RuvA(8)-RuvB(12)-Holliday junction (HJ) complex. HJ DNA is sandwiched between 2 RuvA tetramers; dsDNA enters through RuvA and exits via RuvB. An RuvB hexamer assembles on each DNA strand where it exits the tetramer. Each RuvB hexamer is contacted by two RuvA subunits (via domain III) on 2 adjacent RuvB subunits; this complex drives branch migration. In the full resolvosome a probable DNA-RuvA(4)-RuvB(12)-RuvC(2) complex forms which resolves the HJ.

The protein localises to the cytoplasm. In terms of biological role, the RuvA-RuvB-RuvC complex processes Holliday junction (HJ) DNA during genetic recombination and DNA repair, while the RuvA-RuvB complex plays an important role in the rescue of blocked DNA replication forks via replication fork reversal (RFR). RuvA specifically binds to HJ cruciform DNA, conferring on it an open structure. The RuvB hexamer acts as an ATP-dependent pump, pulling dsDNA into and through the RuvAB complex. HJ branch migration allows RuvC to scan DNA until it finds its consensus sequence, where it cleaves and resolves the cruciform DNA. This is Holliday junction branch migration complex subunit RuvA from Clostridium beijerinckii (strain ATCC 51743 / NCIMB 8052) (Clostridium acetobutylicum).